The chain runs to 205 residues: Cbp/p300-interacting transactivator 3 (205 aa).

The protein belongs to the CITED family.

It is found in the nucleus. Functionally, acts as a transcriptional coactivator. Enhances estrogen-dependent transactivation mediated by estrogen receptors. This is Cbp/p300-interacting transactivator 3 (CITED3) from Gallus gallus (Chicken).